The chain runs to 547 residues: Heme-binding protein A (547 aa).

The first 18 residues, 1–18 (MKLKATLTLAAATLVLAA), serve as a signal peptide directing secretion. Residue C19 is the site of N-palmitoyl cysteine attachment. C19 carries S-diacylglycerol cysteine lipidation.

The protein belongs to the bacterial solute-binding protein 5 family.

The protein localises to the cell inner membrane. In terms of biological role, important role in heme acquisition or metabolism. This is Heme-binding protein A (hbpA) from Haemophilus influenzae (strain ATCC 51907 / DSM 11121 / KW20 / Rd).